Reading from the N-terminus, the 615-residue chain is RUN domain-containing protein 1 (615 aa).

The interval 15–41 is disordered; the sequence is TAVGPKAKDEEEEEEEEESLPPCETVR. The segment covering 24–33 has biased composition (acidic residues); it reads EEEEEEEEES. Position 73 is a phosphoserine (S73). Coiled coils occupy residues 76–102 and 163–238; these read DATVRTLRRLEAERRQLDSALLALSSH and RVRG…NLNE. Residues 147-180 form a disordered region; that stretch reads DPCGGDESDVLPGDRPRVRGEDQSEQEKRERLET. A compositionally biased stretch (basic and acidic residues) spans 158–180; it reads PGDRPRVRGEDQSEQEKRERLET. An RUN domain is found at 423-604; the sequence is ELTTVVRKEL…LKFSLPVDLA (182 aa). Position 499 is a phosphoserine (S499).

Functionally, may play a role as p53/TP53 inhibitor and thus may have oncogenic activity. The polypeptide is RUN domain-containing protein 1 (Rundc1) (Mus musculus (Mouse)).